A 1523-amino-acid chain; its full sequence is Disco-interacting protein 2 homolog A (1523 aa).

One can recognise a DMAP1-binding domain in the interval 9–105 (EAAPLPAEVL…TSSASEDEGS (97 aa)). A disordered region spans residues 72–110 (KMPMPSKRRSALVHSSVETYTPPDTSSASEDEGSLRRPG). Over residues 87-99 (SVETYTPPDTSSA) the composition is skewed to polar residues. 2 positions are modified to phosphothreonine: threonine 92 and threonine 115. Residues 132–158 (QGSSTSSSASSTSSHPGGRPAAAPSAS) form a disordered region. Over residues 134–158 (SSTSSSASSTSSHPGGRPAAAPSAS) the composition is skewed to low complexity. 2 consecutive short sequence motifs (PXXP motif; required for interaction with CTTN) follow at residues 235-238 (PKRP) and 259-262 (PNQP).

It belongs to the DIP2 family. In terms of assembly, interacts with FSTL1; DIP2A may act as a cell surface receptor for FSTL1. Interacts (via N-terminus) with CTTN (via SH3 domain); the interaction promotes acetylation of CTTN and is required for proper synaptic transmission. Interacts with SHANK3. As to expression, detected in heart, liver, spleen, lung, kidney and brain with highest levels in brain (at protein level). In adult cortex, preferentially expressed in excitatory neurons. Broadly expressed in neuronal, reproductive and vascular tissues as well as in heart, kidney, liver and lung with expression detected in neurons, mesenchyme, endothelium, smooth muscle cells and cardiomyocytes. Expressed in ectoderm-derived tissues in the developing embryo. Expressed in the developing nervous system.

The protein resides in the cell membrane. It localises to the mitochondrion. It is found in the cell projection. Its subcellular location is the dendritic spine. The catalysed reaction is acetate + ATP + CoA = acetyl-CoA + AMP + diphosphate. In terms of biological role, catalyzes the de novo synthesis of acetyl-CoA in vitro. Promotes acetylation of CTTN, possibly by providing the acetyl donor, ensuring correct dendritic spine morphology and synaptic transmission. Binds to follistatin-related protein FSTL1 and may act as a cell surface receptor for FSTL1, contributing to AKT activation and subsequent FSTL1-induced survival and function of endothelial cells and cardiac myocytes. The chain is Disco-interacting protein 2 homolog A (Dip2a) from Mus musculus (Mouse).